The primary structure comprises 395 residues: Elongation factor Tu (395 aa).

Positions 10–204 (KEHANIGTIG…AVDDFIPTPE (195 aa)) constitute a tr-type G domain. A G1 region spans residues 19–26 (GHVDHGKT). 19-26 (GHVDHGKT) provides a ligand contact to GTP. Mg(2+) is bound at residue Thr-26. The segment at 60–64 (GITIN) is G2. The G3 stretch occupies residues 81–84 (DCPG). GTP contacts are provided by residues 81-85 (DCPGH) and 136-139 (NKVD). Positions 136-139 (NKVD) are G4. Residues 174–176 (SAL) are G5.

The protein belongs to the TRAFAC class translation factor GTPase superfamily. Classic translation factor GTPase family. EF-Tu/EF-1A subfamily. Monomer.

It localises to the cytoplasm. It catalyses the reaction GTP + H2O = GDP + phosphate + H(+). GTP hydrolase that promotes the GTP-dependent binding of aminoacyl-tRNA to the A-site of ribosomes during protein biosynthesis. The polypeptide is Elongation factor Tu (Staphylococcus saprophyticus subsp. saprophyticus (strain ATCC 15305 / DSM 20229 / NCIMB 8711 / NCTC 7292 / S-41)).